The following is a 450-amino-acid chain: Exodeoxyribonuclease 7 large subunit (450 aa).

The protein belongs to the XseA family. Heterooligomer composed of large and small subunits.

It localises to the cytoplasm. The enzyme catalyses Exonucleolytic cleavage in either 5'- to 3'- or 3'- to 5'-direction to yield nucleoside 5'-phosphates.. Functionally, bidirectionally degrades single-stranded DNA into large acid-insoluble oligonucleotides, which are then degraded further into small acid-soluble oligonucleotides. The chain is Exodeoxyribonuclease 7 large subunit from Listeria innocua serovar 6a (strain ATCC BAA-680 / CLIP 11262).